Here is a 164-residue protein sequence, read N- to C-terminus: FMN reductase (NADH) RutF (164 aa).

It belongs to the non-flavoprotein flavin reductase family. RutF subfamily.

It catalyses the reaction FMNH2 + NAD(+) = FMN + NADH + 2 H(+). In terms of biological role, catalyzes the reduction of FMN to FMNH2 which is used to reduce pyrimidine by RutA via the Rut pathway. This Escherichia coli O6:K15:H31 (strain 536 / UPEC) protein is FMN reductase (NADH) RutF.